The primary structure comprises 243 residues: Small ribosomal subunit protein uS3 (243 aa).

A KH type-2 domain is found at 39-110 (IRTFIQKKYS…QVRINVVEVE (72 aa)). A disordered region spans residues 221–243 (GAIPRRKGSRKPQQFEDRSNENS). The segment covering 233-243 (QQFEDRSNENS) has biased composition (basic and acidic residues).

Belongs to the universal ribosomal protein uS3 family. As to quaternary structure, part of the 30S ribosomal subunit. Forms a tight complex with proteins S10 and S14.

Functionally, binds the lower part of the 30S subunit head. Binds mRNA in the 70S ribosome, positioning it for translation. The protein is Small ribosomal subunit protein uS3 of Prochlorococcus marinus subsp. pastoris (strain CCMP1986 / NIES-2087 / MED4).